The primary structure comprises 2591 residues: MYNKGINICLNEDNKCIILLHIIFNKCIVSFVASHILVEGKICFLNRIKNSKIFRRFGNINNHRRNNVKEYYKFVGRINKGKEKRNKCRIKLHRFYEYAKSYILKQIKWVLNKSKYIYFNIIYHLKTICYLKNAFFLQYTQRKYFSQNIENYIINSLPKHIQSFNPIKWSYYNNNEYASNYIIINNLNFIKYKNKYEKQYDIEMEEDINCKGANDIFYNSYNYCNNNNSNSKCDEKIEKNIVDKNIENKYNIKEYDKTNKSILFPIEEEFKKIIQIENNIERNYMVPNESNKNILYNIKNILEKIRNIEAISNINNYIDMKNTIESYKLNPDKCKEILHKDKDFRNKSKLCLSCFHNIIHKIIYYSKMENISFSDMYKQLLTNYNNTSCEYCNLINNSINSNNDFLSLYNDKNMYNWKNCEKNKFETLENEISCWNFNSSYGNHFQHIQKNSKIYRRILNEENEKAFNNIVGRNEMENDELYKRIHTENNYANQFTENNVDFGVYSDLREYNNGNEKYMLDENEMDQIIDEEVKKQEKNQNLNNMDFNNVNKKYNQLKDDNIIIFNKNNMHNNLYSNGLNDSNLEKNNILFPYEKYNNLDKNEMNLTKYSQNKQFYGQYKYDEAIYKYDLIVLDTSGYIYKVSTDGTYHWKYRIVKNIQYYINYEEENKIENYYNAFKKNNGKINMTHKDILRKNDYEQYHKLKLRAMKKLQYNNFIDVFNSNYKKNYPTYLNEQITEKDDIYKKKNYNYEKSKKKSKNKNAMKKLLSDYSGDLFYVDENNEAIPININIKDVVNNSPFKSTLFPNILFIGSRQSSIVNLDFDTGYVIKKYEENYDDLVKEKQKALPNKYEKFINKNSNVLHDKLEKYLDHSIDINDKNYYVNEEKDDLDKDYTIIDGKVAENNQQLDNIDLYNNEIETENNNGINHLLLIDGKGQIEEQSPNNGNKIIKGDVSNMTDECGTENCLSKHSKEEIEIANNKFNKNNKDKLLIQRTKIKNKKHFLMGKWYMNISNNNLLNINSSVLGINKKKRNSKKGENRNKKRKTQKRQLQISLVKWVIKAVDETSLKQKWITSWVDVGSIFITDSHKQDLSFINSLIDIDGNKLILRTLENNKVNKPYNNTISKNIEDAERNELEFASENYKNDIPNEIDEHNNKMGRNMNKLNSNIKSKIFIFSKEISSVFALQYKSKTNIFTLDTILKQNEKLFPEYDNIKPYSYNLLNLKNNSNALLLPFSSSNDYLKNNDKKNLPWNFNYDENGTNANNSIAFQNYNNFIVQRLNNISINITSIEKDLRYLLLSIIFVFDKHKKIPMNYIFQMKTLLHEYQKTKQKFMICLRGLNHNKNINIFSNHNDIRDTDIKHYGYNDYDYINKEMDAIDEPIHICEYTNKFIDLSFEGKEKCIDYCSMLNIWDKIFNNYTNHDDCLLLSNLYRILNSTYPLTNKDFNRIIDGIFLKNNESMLIKRRRKPNEGSRNHDLTEFSSQKHKKSWYWNIFYAITLVIVIPFIFIYRLFKKQTNNKNNNKIIMRKKKITDYDEDSNDTYDDELLNIDKVLLKRNKRKLANILKENGISSLNKTELEKYMKKSLKKAQDIEQLTLVDILARHARDSDSDSNFYDIHDGKYNLYPYYYSGQESKYSLPNMHYIDLSKSNSGETNKYDLNGNNLFYMHRRRAASQDVTYKQSFIVKKRVRSNYKLGNKYNKRNYTDYEKDKKNSSIKERNINEKAFDKSDFINFLKNFNKKFMKKNPFVDHLMKNNKTDSNNEFNNDNKEKSKYLYNEKYNLNSADEENKSPYAKKYSDEKKNRSKSSKYIENTQSNNNDNTNGNMNVGNHINNDKMNNKGSSARNLSIIQTSHIPYDAPLADFLENGRFTRTFQNISLIGQGGFGSVYKVSHRLEPGSPTYAVKFIYLKVSSLDNVNSRRYFREIAANRDIYSKHVVRYYTWWCEEPQFLPMDIIPKEIQNTLKKNKDPFKKVCNKNKKDNDYSSDCTVSSGENNKFDLKNYKKVITKKNSPKLKFYSDNDTPYNKRKNINQKNSFLNDKNLSDNIYIIENNKKKKKKKKKKKKIIYKEKKKGNIGINEDNKYSTFYEQNNPNNFSSTLQEYDPFGYGYLSENERDLIVFADNDESNGSGHSKKNDNDERKSLNNQNGIYNTGGDISKNGNVIHDDSNMLACQQSDKNSMTIKNTQGTSINGTINRNTISDETGTQGTNNNPKYSIDYHIDAIVKPKGESFTWVEKSPSNKYKKDSLDIINRNRKLIEEKNKKEKGQEKEKYKLKMNGELEKKENANKIKYYKKKNVGPEFSIVLLLQMEFCKGFTLRRWLDRSSRSDKPLYFTYGDKNTNHPLEFDLFKQLIKGLKDIHSTCFIHRDLKPENIFVDLDTYILKIGDLGLVRFIEEKKRENDLNNIDNFKDNIYTEINHNTITSQISLKGQMIGTPGYTAPEGGALCDEKADIYSAALILLELLCPRFNTIMERYKTLNDFRNYYTVPDYVKIHLNPWYILMLQMSKPNPADRPSAADLYNKIKVLLDPHLTDFTFSFNDINNDDLEYTGNRNVINSTNPNGDIKENVNQNNLVDDKGNNNIINGNEVDH.

The Cytoplasmic segment spans residues 1–16 (MYNKGINICLNEDNKC). A helical membrane pass occupies residues 17-37 (IILLHIIFNKCIVSFVASHIL). The Lumenal portion of the chain corresponds to 38-1488 (VEGKICFLNR…EFSSQKHKKS (1451 aa)). Positions 1028–1048 (KKKRNSKKGENRNKKRKTQKR) are disordered. The helical transmembrane segment at 1489-1509 (WYWNIFYAITLVIVIPFIFIY) threads the bilayer. Residues 1510–2591 (RLFKKQTNNK…NIINGNEVDH (1082 aa)) are Cytoplasmic-facing. A disordered region spans residues 1781-1840 (NLNSADEENKSPYAKKYSDEKKNRSKSSKYIENTQSNNNDNTNGNMNVGNHINNDKMNNK). The segment covering 1813 to 1832 (NTQSNNNDNTNGNMNVGNHI) has biased composition (low complexity). ATP-binding positions include 1880 to 1888 (IGQGGFGSV) and lysine 1905. Disordered regions lie at residues 2123-2157 (DNDE…GGDI) and 2183-2212 (IKNT…TNNN). The span at 2134-2143 (KKNDNDERKS) shows a compositional bias: basic and acidic residues. In terms of domain architecture, Protein kinase spans 2181-2532 (MTIKNTQGTS…KIKVLLDPHL (352 aa)). Residue aspartate 2369 is the Proton acceptor of the active site. Threonine 2436 carries the phosphothreonine; by autocatalysis modification. Residues 2558–2574 (STNPNGDIKENVNQNNL) are compositionally biased toward polar residues. Positions 2558-2591 (STNPNGDIKENVNQNNLVDDKGNNNIINGNEVDH) are disordered. Residues 2580–2591 (NNNIINGNEVDH) are compositionally biased toward low complexity.

This sequence belongs to the protein kinase superfamily. Ser/Thr protein kinase family. GCN2 subfamily. May form oligomers in response to stress; oligomerization may result in catalytic activity. Interacts with BIP; the interaction is disrupted in response to stress.

The protein localises to the endoplasmic reticulum membrane. The catalysed reaction is L-seryl-[protein] + ATP = O-phospho-L-seryl-[protein] + ADP + H(+). It catalyses the reaction L-threonyl-[protein] + ATP = O-phospho-L-threonyl-[protein] + ADP + H(+). Dissociation from BIP and oligomerization, may results autophosphorylation and kinase activity induction. In terms of biological role, during the asexual blood stage, phosphorylates translation factor eIF2alpha in late schizonts resulting in protein translation inhibition. Plays a role in trophozoite differentiation into schizonts. This chain is Eukaryotic translation initiation factor 2-alpha kinase PK4, found in Plasmodium berghei (strain Anka).